The primary structure comprises 867 residues: GATOR2 complex protein Mio (867 aa).

WD repeat units follow at residues 51 to 86 (ANESRYQYARCVAASYHSDQPIIAVGLADGKVGICN), 100 to 144 (RQQR…PKET), 149 to 188 (GVGESANSICWDRNHRTVIAGMSQKMIKLFDLRQSNATCQ), 190 to 228 (IQTKTVQGLSVSPNGNYLCSYVDSVITLWDPRNIKSPLR), and 231 to 272 (QSSK…TDNS). The span at 350–376 (PASPTSTAATPTQQQPTSSCSTNSGSS) shows a compositional bias: low complexity. Residues 350-378 (PASPTSTAATPTQQQPTSSCSTNSGSSLD) form a disordered region. The segment at 739–777 (LSCNFCGKSVSNALLDEPRPRSTTTSTNRLSSCPSCRKP) adopts a C4-type zinc-finger fold. Cys-741, Cys-744, Cys-771, Cys-774, Cys-784, Cys-821, Cys-824, His-826, His-829, His-832, Cys-843, Cys-848, and Cys-852 together coordinate Zn(2+). The RING-type; atypical zinc finger occupies 778 to 857 (LPRCSLCLMH…CNCRCFDMDG (80 aa)).

The protein belongs to the WD repeat mio family. Component of the GATOR complex consisting of mio, Nup44A/Seh1, Im11, Nplr3, Nplr2, Wdr24, Wdr59 and Sec13. Within the GATOR complex, probable component of the GATOR2 subcomplex which is likely composed of mio, Nup44A/Seh1, Wdr24, Wdr59 and Sec13. Interacts with Wdr24. Interacts with nucleoporin Nup44A/Seh1. The GATOR2 complex associates with unmet in the absence of S-adenosyl-L-methionine; the mio-Wdr24-Nup44A subcomplex is essential and sufficient for this interaction while Wdr59 and Sec13 are dispensable. This association acts as a nutrient sensor to inhibit mTORC1 signaling in the absence of methionine. As to expression, present in the oocyte.

Its subcellular location is the nucleus. It is found in the lysosome. In terms of biological role, an essential component of the GATOR subcomplex GATOR2 which functions as an activator of the amino acid-sensing branch of the mTORC1 signaling pathway. The two GATOR subcomplexes, GATOR1 and GATOR2, regulate the mTORC1 pathway in order to mediate metabolic homeostasis, female gametogenesis and the response to amino acid limitation and complete starvation. GATOR2 activates the mTORC1 signaling pathway through the inhibition of the GATOR1 subcomplex, controlling the switch to cell proliferation and growth under nutrient replete conditions and during female oocyte development. This component is required for activating mTORC1 specifically in germline cells to promote cell growth and maintain the oocyte fate. GATOR1 and GATOR2 act at different stages of oogenesis to regulate mTORC1 in order to control meiotic entry and promote oocyte growth and development. After exactly four mitotic cyst divisions, the GATOR1 complex members (Iml1, Nprl2 and Nprl3) down-regulate mTORC1 to slow cellular metabolism and promote the mitotic/meiotic transition. At later stages of oogenesis, the mio and Nup44A components of the GATOR2 complex inhibit GATOR1 and thus activate mTORC1 to promote meiotic progression, and drive oocyte growth and development. In addition to its role in the regulation of the mTORC1 complex, functions independently of mTORC1 to prevent the inappropriate accumulation of autolysosomes in germline tissues. This is GATOR2 complex protein Mio from Drosophila melanogaster (Fruit fly).